The following is a 117-amino-acid chain: Large ribosomal subunit protein bL20 (117 aa).

Belongs to the bacterial ribosomal protein bL20 family.

In terms of biological role, binds directly to 23S ribosomal RNA and is necessary for the in vitro assembly process of the 50S ribosomal subunit. It is not involved in the protein synthesizing functions of that subunit. This chain is Large ribosomal subunit protein bL20, found in Brachyspira hyodysenteriae (strain ATCC 49526 / WA1).